The primary structure comprises 487 residues: N-succinylglutamate 5-semialdehyde dehydrogenase (487 aa).

221 to 226 (GSSDTG) is a binding site for NAD(+). Active-site residues include E244 and C278.

The protein belongs to the aldehyde dehydrogenase family. AstD subfamily.

The enzyme catalyses N-succinyl-L-glutamate 5-semialdehyde + NAD(+) + H2O = N-succinyl-L-glutamate + NADH + 2 H(+). It participates in amino-acid degradation; L-arginine degradation via AST pathway; L-glutamate and succinate from L-arginine: step 4/5. Functionally, catalyzes the NAD-dependent reduction of succinylglutamate semialdehyde into succinylglutamate. The chain is N-succinylglutamate 5-semialdehyde dehydrogenase from Burkholderia multivorans (strain ATCC 17616 / 249).